A 564-amino-acid polypeptide reads, in one-letter code: Dihydroxy-acid dehydratase (564 aa).

[2Fe-2S] cluster is bound at residue Cys-50. Asp-82 is a Mg(2+) binding site. [2Fe-2S] cluster is bound at residue Cys-123. Asp-124 and Lys-125 together coordinate Mg(2+). An N6-carboxylysine modification is found at Lys-125. Cys-195 is a [2Fe-2S] cluster binding site. Glu-447 contributes to the Mg(2+) binding site. The Proton acceptor role is filled by Ser-473.

It belongs to the IlvD/Edd family. In terms of assembly, homodimer. Requires [2Fe-2S] cluster as cofactor. Mg(2+) serves as cofactor.

It carries out the reaction (2R)-2,3-dihydroxy-3-methylbutanoate = 3-methyl-2-oxobutanoate + H2O. The enzyme catalyses (2R,3R)-2,3-dihydroxy-3-methylpentanoate = (S)-3-methyl-2-oxopentanoate + H2O. Its pathway is amino-acid biosynthesis; L-isoleucine biosynthesis; L-isoleucine from 2-oxobutanoate: step 3/4. It functions in the pathway amino-acid biosynthesis; L-valine biosynthesis; L-valine from pyruvate: step 3/4. Its function is as follows. Functions in the biosynthesis of branched-chain amino acids. Catalyzes the dehydration of (2R,3R)-2,3-dihydroxy-3-methylpentanoate (2,3-dihydroxy-3-methylvalerate) into 2-oxo-3-methylpentanoate (2-oxo-3-methylvalerate) and of (2R)-2,3-dihydroxy-3-methylbutanoate (2,3-dihydroxyisovalerate) into 2-oxo-3-methylbutanoate (2-oxoisovalerate), the penultimate precursor to L-isoleucine and L-valine, respectively. This Chloroflexus aggregans (strain MD-66 / DSM 9485) protein is Dihydroxy-acid dehydratase.